Reading from the N-terminus, the 233-residue chain is C-type lectin domain family 2 member D2 (233 aa).

The segment at 1–34 is disordered; it reads MPSSAHLQDAPPLLSRTLTQDEEQTSLRQSSSCG. At 1–76 the chain is on the cytoplasmic side; sequence MPSSAHLQDA…SPESPAKLPC (76 aa). A helical; Signal-anchor for type II membrane protein transmembrane segment spans residues 77–97; the sequence is CYGVIMVLSVAVVALSVALSV. At 98-233 the chain is on the extracellular side; sequence KKTPQILTVK…KPNSYTSQCQ (136 aa). One can recognise a C-type lectin domain in the interval 119–228; sequence VGNKCYYFNE…KSICSKPNSY (110 aa). Asparagine 132 carries N-linked (GlcNAc...) asparagine glycosylation.

The protein localises to the cell membrane. Its function is as follows. Lectin-type cell surface receptor. In Rattus norvegicus (Rat), this protein is C-type lectin domain family 2 member D2 (Clec2d2).